A 570-amino-acid chain; its full sequence is Rqc2 homolog RqcH (570 aa).

The segment at 1–173 (MSFDGMFTYG…LPPAQDKISP (173 aa)) is NFACT-N domain. The hhH domain stretch occupies residues 179–281 (DDILRHLSFQ…ELLDRFYFGK (103 aa)). 2 coiled-coil regions span residues 279–336 (FGKA…TANL) and 368–430 (TPSE…VEGK). The coiled-coil-M (CCM) stretch occupies residues 282 to 434 (AERDRVKQQA…ELVEGKYLRP (153 aa)). Residues 446–570 (HNPVLETYES…ADTVIKLKKS (125 aa)) form an NFACT-R region.

Belongs to the NEMF family. In terms of assembly, associates with isolated or stalled 50S ribosomal subunits. Binds to RqcP. Interacts with ribosomal protein uL11. Displaced from the 50S subunit by thiostrepton. In crystallized 50S subunits RqcH is variously associated with A/P-site tRNA, P-site tRNA and RqcP, an E-site tRNA or A- and P-site tRNAs and RqcP2(YlmH).

Its function is as follows. Key component of the ribosome quality control system (RQC), a ribosome-associated complex that mediates the extraction of incompletely synthesized nascent chains from stalled ribosomes and their subsequent degradation. RqcH recruits Ala-charged tRNA, and with RqcP directs the elongation of stalled nascent chains on 50S ribosomal subunits, leading to non-templated C-terminal alanine extensions (Ala tail). The Ala tail promotes nascent chain degradation. RqcH, RqcP and charged tRNA(Ala) are necessary and sufficient to add an Ala tail to a model stalled nascent peptide; does not add Val. Binds the P-site tRNA in 50S ribosomal subunit, unwinds the anticodon stem and interacts with the splayed anticodon. Selectively binds tRNA(Ala) isoacceptors, even in the absence of the 50S ribosomal subunit. Adds between 1 and at least 8 Ala residues to the nascent chain; detection of the Ala tail requires either deletion of clpP or its inhibition. Binds to 50S ribosomal subunits, at least 30% of which contain a P-site tRNA and thus are obstructed. In Bacillus subtilis (strain 168), this protein is Rqc2 homolog RqcH.